We begin with the raw amino-acid sequence, 409 residues long: Peptide chain release factor subunit 1 (409 aa).

Belongs to the eukaryotic release factor 1 family. As to quaternary structure, heterodimer of two subunits, one of which binds GTP.

The protein localises to the cytoplasm. In terms of biological role, directs the termination of nascent peptide synthesis (translation) in response to the termination codons UAA, UAG and UGA. In Methanopyrus kandleri (strain AV19 / DSM 6324 / JCM 9639 / NBRC 100938), this protein is Peptide chain release factor subunit 1.